We begin with the raw amino-acid sequence, 664 residues long: E3 ubiquitin-protein ligase CHFR (664 aa).

Residues 38–89 (WTIGRRRGCDLSFPSNKLVSGDHCKLTVDEISGEVTLEDTSTNGTVINKLQV) form the FHA domain. Disordered stretches follow at residues 170–220 (LEEP…GRSS) and 245–264 (ESKDHEELEPAKKKMKGDGE). The span at 174 to 202 (QPSTSTSDLLPTASTSSTEPELTSAGQKH) shows a compositional bias: polar residues. A compositionally biased stretch (low complexity) spans 203–215 (SSSSGPGNTSISP). Basic and acidic residues predominate over residues 245 to 263 (ESKDHEELEPAKKKMKGDG). Residues 303–342 (CIICQDLLHDCVSLQPCMHTFCAACYSGWMERSSLCPTCR) form an RING-type zinc finger. Position 385 is a phosphothreonine (Thr-385). The segment at 389–413 (LQPKVRRSFSDEEGSSEDLLELSDV) is disordered. Residues 399-413 (DEEGSSEDLLELSDV) show a composition bias toward acidic residues. A PBZ-type zinc finger spans residues 633 to 655 (PDCYWGRNCRTQVKAHHAMKFNH).

Belongs to the CHFR family. Interacts with HDAC1 and HDAC2. Interacts with PML (with sumoylated form of PML). Post-translationally, poly-ADP-ribosylated. In addition to binding non covalently poly(ADP-ribose) via its PBZ-type zinc finger, the protein is also covalently poly-ADP-ribosylated by PARP1. Autoubiquitinated; may regulate its cellular level. In terms of processing, phosphorylated by PKB. Phosphorylation may affect its E3 ligase activity.

It is found in the nucleus. It localises to the PML body. It carries out the reaction S-ubiquitinyl-[E2 ubiquitin-conjugating enzyme]-L-cysteine + [acceptor protein]-L-lysine = [E2 ubiquitin-conjugating enzyme]-L-cysteine + N(6)-ubiquitinyl-[acceptor protein]-L-lysine.. It functions in the pathway protein modification; protein ubiquitination. Its function is as follows. E3 ubiquitin-protein ligase that functions in the antephase checkpoint by actively delaying passage into mitosis in response to microtubule poisons. Acts in early prophase before chromosome condensation, when the centrosome move apart from each other along the periphery of the nucleus. Probably involved in signaling the presence of mitotic stress caused by microtubule poisons by mediating the 'Lys-48'-linked ubiquitination of target proteins, leading to their degradation by the proteasome. Promotes the ubiquitination and subsequent degradation of AURKA and PLK1. Probably acts as a tumor suppressor, possibly by mediating the polyubiquitination of HDAC1, leading to its degradation. May also promote the formation of 'Lys-63'-linked polyubiquitin chains and functions with the specific ubiquitin-conjugating UBC13-MMS2 (UBE2N-UBE2V2) heterodimer. Substrates that are polyubiquitinated at 'Lys-63' are usually not targeted for degradation, but are rather involved in signaling cellular stress. This chain is E3 ubiquitin-protein ligase CHFR (Chfr), found in Mus musculus (Mouse).